A 990-amino-acid chain; its full sequence is Bifunctional glutamine synthetase adenylyltransferase/adenylyl-removing enzyme (990 aa).

Positions 1 to 474 are adenylyl removase; the sequence is MPTDNENSMT…HFNELVEESQ (474 aa). An adenylyl transferase region spans residues 484 to 990; it reads FIACQDAWRL…WDTLFGTCSE (507 aa).

It belongs to the GlnE family. Mg(2+) serves as cofactor.

It catalyses the reaction [glutamine synthetase]-O(4)-(5'-adenylyl)-L-tyrosine + phosphate = [glutamine synthetase]-L-tyrosine + ADP. It carries out the reaction [glutamine synthetase]-L-tyrosine + ATP = [glutamine synthetase]-O(4)-(5'-adenylyl)-L-tyrosine + diphosphate. In terms of biological role, involved in the regulation of glutamine synthetase GlnA, a key enzyme in the process to assimilate ammonia. When cellular nitrogen levels are high, the C-terminal adenylyl transferase (AT) inactivates GlnA by covalent transfer of an adenylyl group from ATP to specific tyrosine residue of GlnA, thus reducing its activity. Conversely, when nitrogen levels are low, the N-terminal adenylyl removase (AR) activates GlnA by removing the adenylyl group by phosphorolysis, increasing its activity. The regulatory region of GlnE binds the signal transduction protein PII (GlnB) which indicates the nitrogen status of the cell. This is Bifunctional glutamine synthetase adenylyltransferase/adenylyl-removing enzyme from Alteromonas mediterranea (strain DSM 17117 / CIP 110805 / LMG 28347 / Deep ecotype).